A 294-amino-acid polypeptide reads, in one-letter code: 2-hydroxy-3-oxopropionate reductase (294 aa).

Residues 4-18 (GFIGLGIMGKPMSKN) and Ser-95 contribute to the NAD(+) site. The active site involves Lys-170. NAD(+) is bound at residue Lys-238.

The protein belongs to the HIBADH-related family. 2-hydroxy-3-oxopropionate reductase subfamily.

It catalyses the reaction (R)-glycerate + NADP(+) = 2-hydroxy-3-oxopropanoate + NADPH + H(+). The enzyme catalyses (R)-glycerate + NAD(+) = 2-hydroxy-3-oxopropanoate + NADH + H(+). It participates in carbohydrate acid metabolism; galactarate degradation; D-glycerate from galactarate: step 3/3. Catalyzes the reduction of tatronate semialdehyde to D-glycerate. The polypeptide is 2-hydroxy-3-oxopropionate reductase (Escherichia coli O6:H1 (strain CFT073 / ATCC 700928 / UPEC)).